The sequence spans 386 residues: Succinate--CoA ligase [ADP-forming] subunit beta (386 aa).

The ATP-grasp domain maps to 9 to 244 (KQVLRSSNLN…DSQIDAKEAA (236 aa)). ATP is bound by residues Lys46, 53–55 (GRG), Glu99, Leu102, and Glu107. Mg(2+)-binding residues include Asn199 and Asp213. Substrate contacts are provided by residues Asn264 and 321–323 (GIV).

It belongs to the succinate/malate CoA ligase beta subunit family. As to quaternary structure, heterotetramer of two alpha and two beta subunits. Mg(2+) is required as a cofactor.

It carries out the reaction succinate + ATP + CoA = succinyl-CoA + ADP + phosphate. The catalysed reaction is GTP + succinate + CoA = succinyl-CoA + GDP + phosphate. It participates in carbohydrate metabolism; tricarboxylic acid cycle; succinate from succinyl-CoA (ligase route): step 1/1. Succinyl-CoA synthetase functions in the citric acid cycle (TCA), coupling the hydrolysis of succinyl-CoA to the synthesis of either ATP or GTP and thus represents the only step of substrate-level phosphorylation in the TCA. The beta subunit provides nucleotide specificity of the enzyme and binds the substrate succinate, while the binding sites for coenzyme A and phosphate are found in the alpha subunit. In Thiobacillus denitrificans (strain ATCC 25259 / T1), this protein is Succinate--CoA ligase [ADP-forming] subunit beta.